Consider the following 393-residue polypeptide: S-adenosylmethionine synthase 2 (393 aa).

Glutamate 9 contributes to the Mg(2+) binding site. Histidine 15 lines the ATP pocket. Glutamate 43 contributes to the K(+) binding site. Residues glutamate 56 and glutamine 99 each coordinate L-methionine. ATP is bound by residues 167 to 169, 235 to 238, aspartate 246, 252 to 253, alanine 269, lysine 273, and lysine 277; these read DGK, SGRF, and RK. Aspartate 246 contributes to the L-methionine binding site. Position 277 (lysine 277) interacts with L-methionine.

The protein belongs to the AdoMet synthase family. As to quaternary structure, homotetramer. Mn(2+) serves as cofactor. The cofactor is Mg(2+). Co(2+) is required as a cofactor. It depends on K(+) as a cofactor.

Its subcellular location is the cytoplasm. The enzyme catalyses L-methionine + ATP + H2O = S-adenosyl-L-methionine + phosphate + diphosphate. Its pathway is amino-acid biosynthesis; S-adenosyl-L-methionine biosynthesis; S-adenosyl-L-methionine from L-methionine: step 1/1. In terms of biological role, catalyzes the formation of S-adenosylmethionine from methionine and ATP. The reaction comprises two steps that are both catalyzed by the same enzyme: formation of S-adenosylmethionine (AdoMet) and triphosphate, and subsequent hydrolysis of the triphosphate. May be involved in the synthesis of betain in response to abiotic stress such as high salinity. This Beta vulgaris (Sugar beet) protein is S-adenosylmethionine synthase 2 (SAMS2).